Reading from the N-terminus, the 105-residue chain is Nucleoid-associated protein SaurJH1_0513 (105 aa).

Positions Met1–Ile33 are disordered. The segment covering Met7–Lys16 has biased composition (low complexity). A compositionally biased stretch (basic and acidic residues) spans Met21–Ile33.

The protein belongs to the YbaB/EbfC family. In terms of assembly, homodimer.

The protein localises to the cytoplasm. Its subcellular location is the nucleoid. Functionally, binds to DNA and alters its conformation. May be involved in regulation of gene expression, nucleoid organization and DNA protection. This Staphylococcus aureus (strain JH1) protein is Nucleoid-associated protein SaurJH1_0513.